A 94-amino-acid chain; its full sequence is Co-chaperonin GroES (94 aa).

Belongs to the GroES chaperonin family. Heptamer of 7 subunits arranged in a ring. Interacts with the chaperonin GroEL.

It localises to the cytoplasm. Functionally, together with the chaperonin GroEL, plays an essential role in assisting protein folding. The GroEL-GroES system forms a nano-cage that allows encapsulation of the non-native substrate proteins and provides a physical environment optimized to promote and accelerate protein folding. GroES binds to the apical surface of the GroEL ring, thereby capping the opening of the GroEL channel. The chain is Co-chaperonin GroES from Finegoldia magna (strain ATCC 29328 / DSM 20472 / WAL 2508) (Peptostreptococcus magnus).